We begin with the raw amino-acid sequence, 384 residues long: S-adenosylmethionine synthase (384 aa).

Residue H15 coordinates ATP. Residue D17 participates in Mg(2+) binding. E43 is a K(+) binding site. 2 residues coordinate L-methionine: E56 and Q99. A flexible loop region spans residues 99 to 109 (QSPDINQGVDK). ATP is bound by residues 164–166 (DAK), 230–231 (RF), D239, 245–246 (RK), A262, and K266. D239 is an L-methionine binding site. L-methionine is bound at residue K270.

Belongs to the AdoMet synthase family. In terms of assembly, homotetramer; dimer of dimers. The cofactor is Mg(2+). K(+) is required as a cofactor.

It localises to the cytoplasm. The catalysed reaction is L-methionine + ATP + H2O = S-adenosyl-L-methionine + phosphate + diphosphate. It participates in amino-acid biosynthesis; S-adenosyl-L-methionine biosynthesis; S-adenosyl-L-methionine from L-methionine: step 1/1. Catalyzes the formation of S-adenosylmethionine (AdoMet) from methionine and ATP. The overall synthetic reaction is composed of two sequential steps, AdoMet formation and the subsequent tripolyphosphate hydrolysis which occurs prior to release of AdoMet from the enzyme. This is S-adenosylmethionine synthase from Vibrio parahaemolyticus serotype O3:K6 (strain RIMD 2210633).